The primary structure comprises 386 residues: S-adenosylmethionine synthase (386 aa).

H14 is an ATP binding site. D16 is a binding site for Mg(2+). K(+) is bound at residue E42. E55 and Q98 together coordinate L-methionine. The segment at 98–108 is flexible loop; that stretch reads QSGDISQGVDG. ATP contacts are provided by residues 162 to 164, 230 to 231, D239, 245 to 246, A262, and K266; these read DSK, RF, and RK. Position 239 (D239) interacts with L-methionine. L-methionine is bound at residue K270.

The protein belongs to the AdoMet synthase family. As to quaternary structure, homotetramer; dimer of dimers. Mg(2+) serves as cofactor. It depends on K(+) as a cofactor.

It localises to the cytoplasm. It carries out the reaction L-methionine + ATP + H2O = S-adenosyl-L-methionine + phosphate + diphosphate. Its pathway is amino-acid biosynthesis; S-adenosyl-L-methionine biosynthesis; S-adenosyl-L-methionine from L-methionine: step 1/1. Functionally, catalyzes the formation of S-adenosylmethionine (AdoMet) from methionine and ATP. The overall synthetic reaction is composed of two sequential steps, AdoMet formation and the subsequent tripolyphosphate hydrolysis which occurs prior to release of AdoMet from the enzyme. This Salinibacter ruber (strain DSM 13855 / M31) protein is S-adenosylmethionine synthase.